The following is a 190-amino-acid chain: Potassium-transporting ATPase KdpC subunit (190 aa).

The chain crosses the membrane as a helical span at residues 10–30 (TFLFLLLITGGVYPLLTTALG).

This sequence belongs to the KdpC family. In terms of assembly, the system is composed of three essential subunits: KdpA, KdpB and KdpC.

It is found in the cell inner membrane. Functionally, part of the high-affinity ATP-driven potassium transport (or Kdp) system, which catalyzes the hydrolysis of ATP coupled with the electrogenic transport of potassium into the cytoplasm. This subunit acts as a catalytic chaperone that increases the ATP-binding affinity of the ATP-hydrolyzing subunit KdpB by the formation of a transient KdpB/KdpC/ATP ternary complex. This Escherichia coli O7:K1 (strain IAI39 / ExPEC) protein is Potassium-transporting ATPase KdpC subunit.